We begin with the raw amino-acid sequence, 490 residues long: Cis-aconitate decarboxylase (490 aa).

This sequence belongs to the PrpD family. Homodimer.

It localises to the mitochondrion. It catalyses the reaction cis-aconitate + H(+) = itaconate + CO2. In terms of biological role, involved in the production of itaconic acid, a soluble unsaturated dicarboxylic acid mainly produced from sugars. This Aspergillus terreus (strain NIH 2624 / FGSC A1156) protein is Cis-aconitate decarboxylase (cad1).